Here is a 525-residue protein sequence, read N- to C-terminus: Keratin, type II cytoskeletal 71 (525 aa).

The interval 1–131 is head; sequence MSRQFTCKSG…DPEIQKVRAQ (131 aa). Positions 132–167 are coil 1A; it reads EREQIKALNNKFASFIDKVRFLEQQNQVLETKWELL. In terms of domain architecture, IF rod spans 132 to 445; that stretch reads EREQIKALNN…KLLESEECRM (314 aa). A linker 1 region spans residues 168-186; it reads QQLDLNNCKNNLEPILEGY. The interval 187 to 278 is coil 1B; it reads ISNLRKQLET…CLYEAEIAQI (92 aa). The tract at residues 279–302 is linker 12; that stretch reads QSHISDMSVILSMDNNRDLNLDSI. A coil 2 region spans residues 303–441; the sequence is IDEVRAQYED…ATYRKLLESE (139 aa). The interval 442–525 is tail; it reads ECRMSGEFPS…LSAPSKKASR (84 aa). Residues 492–525 are disordered; sequence VRGGESRSRSSTTDYKDALGKGSSLSAPSKKASR. The segment covering 495–510 has biased composition (basic and acidic residues); sequence GESRSRSSTTDYKDAL.

The protein belongs to the intermediate filament family. In terms of assembly, heterodimer of a type I and a type II keratin. Associates with KRT16 and/or KRT17.

The protein localises to the cytoplasm. It is found in the cytoskeleton. Plays a central role in hair formation. Essential component of keratin intermediate filaments in the inner root sheath (IRS) of the hair follicle. In Bos taurus (Bovine), this protein is Keratin, type II cytoskeletal 71 (KRT71).